A 693-amino-acid polypeptide reads, in one-letter code: Elongation factor G (693 aa).

The 275-residue stretch at 8–282 folds into the tr-type G domain; that stretch reads EKTRNIGIMA…AVIDYLPSPL (275 aa). Residues 17-24, 81-85, and 135-138 each bind GTP; these read AHVDAGKT, DTPGH, and NKMD.

Belongs to the TRAFAC class translation factor GTPase superfamily. Classic translation factor GTPase family. EF-G/EF-2 subfamily.

Its subcellular location is the cytoplasm. Functionally, catalyzes the GTP-dependent ribosomal translocation step during translation elongation. During this step, the ribosome changes from the pre-translocational (PRE) to the post-translocational (POST) state as the newly formed A-site-bound peptidyl-tRNA and P-site-bound deacylated tRNA move to the P and E sites, respectively. Catalyzes the coordinated movement of the two tRNA molecules, the mRNA and conformational changes in the ribosome. This Streptococcus pneumoniae (strain ATCC 700669 / Spain 23F-1) protein is Elongation factor G.